The sequence spans 119 residues: Odin profilin (119 aa).

It belongs to the Asgard profilin family.

The protein resides in the cytoplasm. It is found in the cytoskeleton. Its activity is regulated as follows. Inhibition of rabbit actin polymerization is reduced by phosphatidylinositol-(4,5)-P2(1,2-dipalmitoyl), a soluble form of the phospholipid phosphatidylinositol, suggesting an unknown lipid might regulate actin-profilin interaction in vivo. In terms of biological role, binds to actin and affects the structure of the cytoskeleton. At high concentrations inhibits spontaneous rabbit actin nucleation. This strongly suggests this archaea has a profilin-regulated actin system, and actin-type genes can be identified in this organism. In Odinarchaeota yellowstonii (strain LCB_4), this protein is Odin profilin.